Here is a 377-residue protein sequence, read N- to C-terminus: Apelin receptor (377 aa).

Residues 1 to 28 are Extracellular-facing; sequence MEDDGYNYYGADNQSECDYADWKPSGAL. N-linked (GlcNAc...) asparagine glycosylation occurs at asparagine 13. 2 disulfides stabilise this stretch: cysteine 17-cysteine 279 and cysteine 100-cysteine 179. The helical transmembrane segment at 29–52 threads the bilayer; the sequence is IPAIYMLVFLLGTTGNGLVLWTVF. The Cytoplasmic portion of the chain corresponds to 53–62; it reads RTSREKRRSA. A helical transmembrane segment spans residues 63 to 84; sequence DIFIASLAVADLTFVVTLPLWA. Topologically, residues 85–97 are extracellular; sequence TYTYREFDWPFGT. Residues 98–123 traverse the membrane as a helical segment; it reads FSCKLSSYLIFVNMYASVFCLTGLSF. Residues 124-144 are Cytoplasmic-facing; the sequence is DRYLAIVRPVANARLRLRVSG. The helical transmembrane segment at 145–162 threads the bilayer; the sequence is AVATAVLWVLAALLAVPV. Residues 163 to 196 lie on the Extracellular side of the membrane; the sequence is MVFRSTDASENGTKIQCYMDYSMVATSNSEWAWE. Asparagine 173 carries N-linked (GlcNAc...) asparagine glycosylation. Residues 197 to 221 form a helical membrane-spanning segment; it reads VGLGVSSTAVGFVVPFTIMLTCYFF. Residues 222–244 are Cytoplasmic-facing; the sequence is IAQTIAGHFRKERIEGLRKRRRL. A helical transmembrane segment spans residues 245 to 268; that stretch reads LSIIVVLVVTFALCWMPYHLVKTL. Residues 269 to 287 are Extracellular-facing; the sequence is YMLGSLLHWPCDFDIFLMN. Residues 288-310 form a helical membrane-spanning segment; the sequence is VFPYCTCISYVNSCLNPFLYAFF. Residues 311–377 are Cytoplasmic-facing; the sequence is DPRFRQACTS…IPYSQETLVD (67 aa). The segment at 334–377 is disordered; it reads HSSSAEKSASYSSGHSQGPGPNMGKGGEQMHEKSIPYSQETLVD. Over residues 335 to 349 the composition is skewed to low complexity; it reads SSSAEKSASYSSGHS.

The protein belongs to the G-protein coupled receptor 1 family. In terms of assembly, homodimer; dimerization inhibits APLNR-mediated G protein and beta-arrestin signaling pathways compared to monomeric APLNR. In terms of tissue distribution, expressed in coronary endothelial cells (at protein level). Expressed in the embryo, allantoic and endothelial precursor cells of the yolk sac at 8 days post-coitum (dpc). Expressed in the secondary heart field and somite at 8.25 dpc. Expressed in fetal allantoic endothelial cells at 9 dpc. Expressed in the allantoid and the invading fetal vasculature of the placenta at 9.5 dpc. Expressed in endothelial cells adjacent to syncytiotrophoblast cells at 10.5 dpc. Expressed weakly in the embryonic heart at 11.5 dpc. Expressed in the adult heart. Expressed in endothelial cells and cardiomyocytes and weakly expressed in fibroblasts.

The protein resides in the cell membrane. In terms of biological role, g protein-coupled receptor for peptide hormones apelin (APLN) and apelin receptor early endogenous ligand (APELA), that plays a role in the regulation of normal cardiovascular function and fluid homeostasis. When acting as apelin receptor, activates both G(i) protein pathway that inhibits adenylate cyclase activity, and the beta-arrestin pathway leading to internalization of the receptor. APLNR/APJ receptor is also activated by mechanical strech in a G-protein-independent fashion to induce beta-arrestin signaling leading to cardiac hypertrophy. However, the presence of apelin ligand blunts cardiac hypertrophic induction from APLNR/APJ on response to pathological stimuli. Plays a key role in early development such as gastrulation, blood vessels formation and heart morphogenesis by acting as a receptor for APELA hormone. May promote angioblast migration toward the embryonic midline, i.e. the position of the future vessel formation, during vasculogenesis. Promotes sinus venosus (SV)-derived endothelial cells migration into the developing heart to promote coronary blood vessel development. Also plays a role in various processes in adults such as regulation of blood vessel formation, blood pressure and heart contractility and protection from cardiac hypertrophy and heart failure. This chain is Apelin receptor, found in Mus musculus (Mouse).